The sequence spans 928 residues: Type II inositol 3,4-bisphosphate 4-phosphatase (928 aa).

Residues 1-13 show a composition bias toward basic and acidic residues; sequence MEIKEEGTSEEGQ. Disordered stretches follow at residues 1-23, 481-516, and 548-575; these read MEIKEEGTSEEGQHFLPAAQAND, ILRKPPSPKVSTEEKSSQHDSPQQLRRQDSIPHHSD, and SRNDKSTGGDSSKDGDADPNLEDSLTSH. The region spanning 23–165 is the C2 domain; sequence DPEDIQFTSI…LKSKEQLLSL (143 aa). Basic and acidic residues-rich tracts occupy residues 506 to 516 and 548 to 563; these read RRQDSIPHHSD and SRNDKSTGGDSSKDGD.

The protein belongs to the inositol 3,4-bisphosphate 4-phosphatase family.

The catalysed reaction is a 1,2-diacyl-sn-glycero-3-phospho-(1D-myo-inositol-3,4-bisphosphate) + H2O = a 1,2-diacyl-sn-glycero-3-phospho-(1D-myo-inositol-3-phosphate) + phosphate. It catalyses the reaction 1D-myo-inositol 3,4-bisphosphate + H2O = 1D-myo-inositol 3-phosphate + phosphate. The enzyme catalyses 1D-myo-inositol 1,3,4-trisphosphate + H2O = 1D-myo-inositol 1,3-bisphosphate + phosphate. The protein operates within signal transduction; phosphatidylinositol signaling pathway. With respect to regulation, strongly inhibited by inositol hexakisphosphate. Functionally, catalyzes the hydrolysis of the 4-position phosphate of phosphatidylinositol 3,4-bisphosphate, inositol 1,3,4-trisphosphate and inositol 3,4-bisphosphate. Plays a role in the late stages of macropinocytosis by dephosphorylating phosphatidylinositol 3,4-bisphosphate in membrane ruffles. The lipid phosphatase activity is critical for tumor suppressor function. Antagonizes the PI3K-AKT/PKB signaling pathway by dephosphorylating phosphoinositides and thereby modulating cell cycle progression and cell survival. The sequence is that of Type II inositol 3,4-bisphosphate 4-phosphatase (Inpp4b) from Rattus norvegicus (Rat).